The sequence spans 216 residues: Probable GTP-binding protein EngB (216 aa).

In terms of domain architecture, EngB-type G spans 30-204 (DGLEVAFAGR…HDVLARWLGL (175 aa)). Residues 38–45 (GRSNAGKS), 64–68 (GRTQL), 82–85 (DLPG), 149–152 (TKAD), and 182–185 (LFSA) each bind GTP. Mg(2+)-binding residues include serine 45 and threonine 66.

The protein belongs to the TRAFAC class TrmE-Era-EngA-EngB-Septin-like GTPase superfamily. EngB GTPase family. Mg(2+) serves as cofactor.

Its function is as follows. Necessary for normal cell division and for the maintenance of normal septation. The sequence is that of Probable GTP-binding protein EngB from Azotobacter vinelandii (strain DJ / ATCC BAA-1303).